Consider the following 806-residue polypeptide: SH3-containing GRB2-like protein 3-interacting protein 1 (806 aa).

Disordered stretches follow at residues 1–115 (MMEG…ESHK) and 142–278 (SIGN…QAAT). 2 stretches are compositionally biased toward basic and acidic residues: residues 16–32 (RKKE…DRDG) and 40–54 (PPYH…EGGK). Phosphoserine is present on residues Ser78, Ser104, Ser105, Ser107, Ser149, Ser151, Ser156, and Ser169. Phosphothreonine occurs at positions 180 and 182. Ser236 and Phe243 each carry phosphoserine. Over residues 245 to 260 (TGTPPPLPPKTVPATP) the composition is skewed to pro residues. Phosphothreonine is present on residues Thr247 and Thr259. 7 positions are modified to phosphoserine: Ser265, Asp274, Ser287, Ser289, Ser300, Ser316, and Ser319. Residues 265 to 276 (SPLTVATGNDQA) are compositionally biased toward polar residues. Residues 315–324 (FSDASPEHVT) show a composition bias toward basic and acidic residues. The interval 315-533 (FSDASPEHVT…SRGPSPLTMG (219 aa)) is disordered. Residues Thr324, Thr328, and Thr335 each carry the phosphothreonine modification. The span at 335–345 (TPPAASDIPAD) shows a compositional bias: low complexity. Ala338 carries the phosphoserine modification. The span at 346-369 (SPAPAPPGPTGSAGPPGPPGPRHV) shows a compositional bias: pro residues. A Phosphoserine modification is found at Ser371. The span at 377-392 (EVQKKVAEQTFIKDDY) shows a compositional bias: basic and acidic residues. Position 398 is a phosphoserine (Ser398). At Thr409 the chain carries Phosphothreonine. Residues 436 to 453 (TSGASSPARPATPLVPCS) are compositionally biased toward low complexity. Residues 454-473 (TTPPPPPPRPPSRPKLPPGK) are compositionally biased toward pro residues. Low complexity-rich tracts occupy residues 480–490 (SRPFSPPIHSS) and 497–520 (PLAR…TTPT). Phosphoserine is present on residues Ser484, Ser505, and Gly533. The region spanning 537–805 (TLPVAAAFTE…RFAAGKYLAD (269 aa)) is the MHD domain. Interaction with DPF motifs-containing proteins regions lie at residues 539–545 (PVAAAFT), 571–573 (SFP), 645–648 (TYYN), and 791–796 (SLIKKR). Positions 627-806 (MPNLMTHLKK…FAAGKYLADN (180 aa)) are necessary and sufficient to mediate interaction with CANX.

Interacts with proteins essential or regulating the formation of functional clathrin-coated pits. Interacts with CANX. Interacts with AP2A1. Interacts with EPS15. Interacts with SH3GL3. Interacts with AMPH. Interacts with ITSN1 (via SH3 domains). Interacts with and REPS1. Detected in brain, spinal cord and cerebellum.

Its subcellular location is the membrane. It localises to the clathrin-coated pit. In terms of biological role, may function in clathrin-mediated endocytosis. Has both a membrane binding/tubulating activity and the ability to recruit proteins essential to the formation of functional clathrin-coated pits. Has a preference for membranes enriched in phosphatidylserine and phosphoinositides and is required for the endocytosis of the transferrin receptor. May also bind tubulin. May play a role in the regulation of energy homeostasis. The sequence is that of SH3-containing GRB2-like protein 3-interacting protein 1 (Sgip1) from Mus musculus (Mouse).